The sequence spans 477 residues: Bifunctional protein HldE (477 aa).

Positions methionine 1–threonine 318 are ribokinase. Asparagine 195–glutamate 198 lines the ATP pocket. The active site involves aspartate 264. The interval methionine 344–aspartate 477 is cytidylyltransferase.

In the N-terminal section; belongs to the carbohydrate kinase PfkB family. It in the C-terminal section; belongs to the cytidylyltransferase family. Homodimer.

The catalysed reaction is D-glycero-beta-D-manno-heptose 7-phosphate + ATP = D-glycero-beta-D-manno-heptose 1,7-bisphosphate + ADP + H(+). The enzyme catalyses D-glycero-beta-D-manno-heptose 1-phosphate + ATP + H(+) = ADP-D-glycero-beta-D-manno-heptose + diphosphate. Its pathway is nucleotide-sugar biosynthesis; ADP-L-glycero-beta-D-manno-heptose biosynthesis; ADP-L-glycero-beta-D-manno-heptose from D-glycero-beta-D-manno-heptose 7-phosphate: step 1/4. The protein operates within nucleotide-sugar biosynthesis; ADP-L-glycero-beta-D-manno-heptose biosynthesis; ADP-L-glycero-beta-D-manno-heptose from D-glycero-beta-D-manno-heptose 7-phosphate: step 3/4. Functionally, catalyzes the phosphorylation of D-glycero-D-manno-heptose 7-phosphate at the C-1 position to selectively form D-glycero-beta-D-manno-heptose-1,7-bisphosphate. Its function is as follows. Catalyzes the ADP transfer from ATP to D-glycero-beta-D-manno-heptose 1-phosphate, yielding ADP-D-glycero-beta-D-manno-heptose. The polypeptide is Bifunctional protein HldE (Edwardsiella ictaluri (strain 93-146)).